The following is a 344-amino-acid chain: Biotin synthase (344 aa).

The Radical SAM core domain occupies 40–267 (AQVQVSTLLS…KSMVRLSAGR (228 aa)). [4Fe-4S] cluster is bound by residues C55, C59, and C62. 4 residues coordinate [2Fe-2S] cluster: C99, C130, C190, and R262.

Belongs to the radical SAM superfamily. Biotin synthase family. In terms of assembly, homodimer. The cofactor is [4Fe-4S] cluster. Requires [2Fe-2S] cluster as cofactor.

The catalysed reaction is (4R,5S)-dethiobiotin + (sulfur carrier)-SH + 2 reduced [2Fe-2S]-[ferredoxin] + 2 S-adenosyl-L-methionine = (sulfur carrier)-H + biotin + 2 5'-deoxyadenosine + 2 L-methionine + 2 oxidized [2Fe-2S]-[ferredoxin]. The protein operates within cofactor biosynthesis; biotin biosynthesis; biotin from 7,8-diaminononanoate: step 2/2. Catalyzes the conversion of dethiobiotin (DTB) to biotin by the insertion of a sulfur atom into dethiobiotin via a radical-based mechanism. This is Biotin synthase from Xanthomonas euvesicatoria pv. vesicatoria (strain 85-10) (Xanthomonas campestris pv. vesicatoria).